We begin with the raw amino-acid sequence, 84 residues long: uncharacterized protein (84 aa).

This is an uncharacterized protein from Escherichia coli O6:H1 (strain CFT073 / ATCC 700928 / UPEC).